Consider the following 534-residue polypeptide: GMP synthase [glutamine-hydrolyzing] (534 aa).

The Glutamine amidotransferase type-1 domain maps to 20-210; that stretch reads PVLVIDFGAQ…LLVGAGCRPS (191 aa). Residue C97 is the Nucleophile of the active site. Catalysis depends on residues H184 and E186. The 198-residue stretch at 211–408 folds into the GMPS ATP-PPase domain; the sequence is WTMINIVEEA…LGLPEDIVWR (198 aa). Position 238–244 (238–244) interacts with ATP; sequence SGGVDSA.

Homodimer.

The enzyme catalyses XMP + L-glutamine + ATP + H2O = GMP + L-glutamate + AMP + diphosphate + 2 H(+). The protein operates within purine metabolism; GMP biosynthesis; GMP from XMP (L-Gln route): step 1/1. Functionally, catalyzes the synthesis of GMP from XMP. In Parafrankia sp. (strain EAN1pec), this protein is GMP synthase [glutamine-hydrolyzing].